The sequence spans 197 residues: Dephospho-CoA kinase (197 aa).

The 196-residue stretch at 2–197 folds into the DPCK domain; it reads IIGLTGGIAS…GAIKDLANLV (196 aa). ATP is bound at residue 10 to 15; sequence ASGKST.

This sequence belongs to the CoaE family.

It localises to the cytoplasm. It catalyses the reaction 3'-dephospho-CoA + ATP = ADP + CoA + H(+). It participates in cofactor biosynthesis; coenzyme A biosynthesis; CoA from (R)-pantothenate: step 5/5. Functionally, catalyzes the phosphorylation of the 3'-hydroxyl group of dephosphocoenzyme A to form coenzyme A. The polypeptide is Dephospho-CoA kinase (Streptococcus thermophilus (strain CNRZ 1066)).